A 436-amino-acid polypeptide reads, in one-letter code: Cyclic GMP-AMP synthase (436 aa).

Q112–Y117 serves as a coordination point for GTP. Positions 131 and 133 each coordinate Mg(2+). R182 is a binding site for ATP. Mg(2+) is bound at residue D193. Residue S259 coordinates ATP. GTP-binding residues include K287, S301, and D348. Disordered regions lie at residues R339 to K358 and A417 to G436. Polar residues predominate over residues E419–G436. G436 participates in a covalent cross-link: Glycyl lysine isopeptide (Gly-Lys) (interchain with K-? in acceptor proteins).

The protein belongs to the CD-NTase family. A01 subfamily. In terms of assembly, monomer. Interacts with Cap2 in the presence and absence of phage T2. A Cap2 dimer is bound on either side by a DncV monomer. Mg(2+) serves as cofactor. In bacteria expressing capV-cdnD-cap2, this protein is conjugated to a number of other proteins (by Cap2 via this protein's C-terminal Gly residue), many of which are involved in metabolism. More conjugated protein is found in the absence of Cap3.

The catalysed reaction is GTP + ATP = 3',3'-cGAMP + 2 diphosphate. Primed for activation by Cap2 which conjugates it to cellular proteins; priming is target protein-specific (green fluorescent protein does not activate the enzyme), but which protein(s) activate is unclear. Enzymatic activity of DncV is inhibited by folate-like molecules, such as 5-methyltetrahydrofolate di-glutamate and 5-methyltetrahydrofolate, suggesting the existence of a signaling pathway that links folate-like metabolism cofactors to the regulation of cyclic dinucleotide second messenger synthesis. Lacks a regulatory loop and is constitutively activated. Its function is as follows. Cyclic nucleotide synthase (second messenger synthase) of a CBASS antivirus system. CBASS (cyclic oligonucleotide-based antiphage signaling system) provides immunity against bacteriophages. The CD-NTase protein (DncV, this protein) synthesizes cyclic nucleotides in response to infection; these serve as specific second messenger signals. The signals activate a diverse range of effectors, leading to bacterial cell death and thus abortive phage infection. A type II-A(GA) CBASS system. Catalyzes the synthesis of 3',3'-cyclic GMP-AMP (cGAMP), a second messenger in cell signal transduction, from GTP and ATP in response to phage infection. Also able to produce c-di-AMP and c-di-GMP from ATP and GTP, respectively; however, cGAMP is the dominant molecule produced by DncV in vivo, contrary to the 2'3'-cGAMP produced by eukaryotes. Is required for efficient V.cholerae intestinal colonization, and down-regulates the colonization-influencing process of chemotaxis. Is not active with dATP, TTP, UTP or CTP. Its product controls the activity of cGAMP-activated phospholipase CapV, a patatin-like lipase that is a direct cGAMP receptor encoded in the dncV operon. Functionally, protects E.coli against phage infection. When the CBASS operon (capV-dncV-cap2-cap3) is introduced in E.coli MG1655 there is about 100-fold protection against phages P1 and T2. When the operon is introduced in E.coli MG1655 there is a more than 10(3) decrease in the efficiency of T2 plaque formation. Protects 100-fold against phage T5, offers no protection against T7. When the operon is introduced in E.coli MG1655 it protects against phages T2, T4, T5 and T6. Another paper shows the operon confers protection against phages P1, T2, T5 and T6 but not T4 or lambda. The protein is Cyclic GMP-AMP synthase of Vibrio cholerae serotype O1 (strain ATCC 39315 / El Tor Inaba N16961).